The following is a 434-amino-acid chain: Enolase 2 (434 aa).

(2R)-2-phosphoglycerate is bound at residue glutamine 171. The active-site Proton donor is the glutamate 213. Aspartate 250, glutamate 293, and aspartate 320 together coordinate Mg(2+). Residues lysine 345, arginine 374, serine 375, and lysine 396 each coordinate (2R)-2-phosphoglycerate. Lysine 345 serves as the catalytic Proton acceptor.

The protein belongs to the enolase family. Mg(2+) serves as cofactor.

Its subcellular location is the cytoplasm. It localises to the secreted. It is found in the cell surface. It carries out the reaction (2R)-2-phosphoglycerate = phosphoenolpyruvate + H2O. The protein operates within carbohydrate degradation; glycolysis; pyruvate from D-glyceraldehyde 3-phosphate: step 4/5. Its function is as follows. Catalyzes the reversible conversion of 2-phosphoglycerate (2-PG) into phosphoenolpyruvate (PEP). It is essential for the degradation of carbohydrates via glycolysis. This Streptomyces coelicolor (strain ATCC BAA-471 / A3(2) / M145) protein is Enolase 2.